A 92-amino-acid polypeptide reads, in one-letter code: uncharacterized protein (92 aa).

Residues 25–53 are disordered; it reads AGRGVRREARDTPCRGTAEGLATSQPEDG.

This is an uncharacterized protein from Treponema pallidum (strain Nichols).